We begin with the raw amino-acid sequence, 323 residues long: Aldo-keto reductase family 1 member C1 (323 aa).

NADP(+) contacts are provided by residues 20–24 and aspartate 50; that span reads GFGTY. Tyrosine 24 provides a ligand contact to substrate. Residue tyrosine 55 is the Proton donor of the active site. Histidine 117 provides a ligand contact to substrate. NADP(+) contacts are provided by residues 166 to 167, glutamine 190, and 216 to 222; these read SN and YSALGSH. Positions 222 and 227 each coordinate substrate. Position 270 to 280 (270 to 280) interacts with NADP(+); the sequence is KSYNEQRIREN.

Belongs to the aldo/keto reductase family. Monomer. In terms of tissue distribution, expressed in liver, adrenal gland, intestine and kidney.

Its subcellular location is the cytoplasm. The protein resides in the cytosol. The catalysed reaction is a 3alpha-hydroxysteroid + NADP(+) = a 3-oxosteroid + NADPH + H(+). The enzyme catalyses a 3alpha-hydroxysteroid + NAD(+) = a 3-oxosteroid + NADH + H(+). It carries out the reaction (17R,20S)-17,20-dihydroxypregn-4-en-3-one + NADP(+) = 17alpha-hydroxyprogesterone + NADPH + H(+). It catalyses the reaction (17R,20S)-17,20-dihydroxypregn-4-en-3-one + NAD(+) = 17alpha-hydroxyprogesterone + NADH + H(+). The catalysed reaction is (20S)-hydroxypregn-4-en-3-one + NADP(+) = progesterone + NADPH + H(+). The enzyme catalyses (20S)-hydroxypregn-4-en-3-one + NAD(+) = progesterone + NADH + H(+). It carries out the reaction (1R,2R)-1,2-dihydrobenzene-1,2-diol + NADP(+) = catechol + NADPH + H(+). It catalyses the reaction (S)-indan-1-ol + NAD(+) = indan-1-one + NADH + H(+). The catalysed reaction is (S)-indan-1-ol + NADP(+) = indan-1-one + NADPH + H(+). The enzyme catalyses 5alpha-androstane-3alpha,17beta-diol + NADP(+) = 17beta-hydroxy-5alpha-androstan-3-one + NADPH + H(+). It carries out the reaction 5alpha-androstane-3beta,17beta-diol + NADP(+) = 17beta-hydroxy-5alpha-androstan-3-one + NADPH + H(+). It catalyses the reaction 5alpha-androstane-3alpha,17beta-diol + NAD(+) = 17beta-hydroxy-5alpha-androstan-3-one + NADH + H(+). The catalysed reaction is 17beta-hydroxy-5alpha-androstan-3-one + NADP(+) = 5alpha-androstan-3,17-dione + NADPH + H(+). The enzyme catalyses androsterone + NADP(+) = 5alpha-androstan-3,17-dione + NADPH + H(+). It carries out the reaction androsterone + NADPH + H(+) = 5alpha-androstane-3alpha,17beta-diol + NADP(+). It catalyses the reaction 5alpha-androstane-3alpha,17beta-diol + NAD(+) = androsterone + NADH + H(+). The catalysed reaction is 17beta-estradiol + NADP(+) = estrone + NADPH + H(+). The enzyme catalyses 17beta-estradiol + NAD(+) = estrone + NADH + H(+). It carries out the reaction testosterone + NADP(+) = androst-4-ene-3,17-dione + NADPH + H(+). It catalyses the reaction 20alpha-hydroxy-5beta-pregnan-3-one + NADP(+) = 5beta-pregnan-3,20-dione + NADPH + H(+). The catalysed reaction is 3beta-hydroxy-5beta-pregnane-20-one + NADP(+) = 5beta-pregnan-3,20-dione + NADPH + H(+). The enzyme catalyses 3beta-hydroxy-5beta-pregnane-20-one + NADPH + H(+) = 3beta,20alpha-dihydroxy-5beta-pregnane + NADP(+). It carries out the reaction (3beta,5alpha,17beta)-3-hydroxyandrostan-17-yl sulfate + NADP(+) = 5alpha-dihydrotestosterone sulfate + NADPH + H(+). It participates in steroid metabolism. Its function is as follows. Cytosolic aldo-keto reductase that catalyzes the NADH and NADPH-dependent reduction of ketosteroids to hydroxysteroids. Most probably acts as a reductase in vivo since the oxidase activity measured in vitro is inhibited by physiological concentrations of NADPH. Displays a broad positional specificity acting on positions 3, 17 and 20 of steroids and regulates the metabolism of hormones like estrogens and androgens. May also reduce conjugated steroids such as 5alpha-dihydrotestosterone sulfate. Displays affinity for bile acids. This chain is Aldo-keto reductase family 1 member C1 (AKR1C1), found in Macaca fuscata fuscata (Japanese macaque).